Consider the following 414-residue polypeptide: Methyltransferase-like protein 2 (414 aa).

The segment at 56 to 77 (LNQHSSESNPKKRKRKQKNSSF) is disordered.

The protein belongs to the MT-A70-like family.

In terms of biological role, probable methyltransferase. This is Methyltransferase-like protein 2 from Arabidopsis thaliana (Mouse-ear cress).